Here is a 393-residue protein sequence, read N- to C-terminus: Leucine aminopeptidase 1 (393 aa).

The signal sequence occupies residues 1-18 (MKLSQVSALAACVPAATA). The propeptide occupies 19-84 (RFVELMEADH…GSQGLRIKES (66 aa)). Residue Asn176 is glycosylated (N-linked (GlcNAc...) asparagine). His184, Asp202, Glu241, and Asp268 together coordinate Zn(2+). Cys317 and Cys321 are disulfide-bonded. His350 is a binding site for Zn(2+).

This sequence belongs to the peptidase M28 family. M28E subfamily. As to quaternary structure, monomer. Zn(2+) serves as cofactor.

It is found in the secreted. In terms of biological role, extracellular aminopeptidase that allows assimilation of proteinaceous substrates. The chain is Leucine aminopeptidase 1 (LAP1) from Metarhizium robertsii (strain ARSEF 23 / ATCC MYA-3075) (Metarhizium anisopliae (strain ARSEF 23)).